Consider the following 752-residue polypeptide: Myb-related protein A (752 aa).

The segment at 1–22 (MAKRSRSEDEDDDLQYADHDYE) is disordered. HTH myb-type domains are found at residues 30–81 (KKLW…QKVL), 82–137 (NPEL…NPEV), and 138–188 (KKSS…RRKV). DNA-binding regions (H-T-H motif) lie at residues 58 to 81 (WTLI…QKVL), 110 to 133 (WSLI…HNHL), and 161 to 184 (WAEI…NSTM). Residue K199 forms a Glycyl lysine isopeptide (Lys-Gly) (interchain with G-Cter in SUMO2) linkage. The tract at residues 230–295 (IPGYQYVSPE…RIPSQPGSFS (66 aa)) is transcriptional activation domain. Residues 298 to 553 (SGSFLMDDNM…IRRSILGTTP (256 aa)) are negative regulatory domain. At K394 the chain carries N6-acetyllysine. Residues 451 to 480 (RKMRVGHSPGSELRDGSLNDGGNMALKHTP) form a disordered region. Glycyl lysine isopeptide (Lys-Gly) (interchain with G-Cter in SUMO2) cross-links involve residues K592 and K602.

Component of the DREAM complex (also named LINC complex) at least composed of E2F4, E2F5, LIN9, LIN37, LIN52, LIN54, MYBL1, MYBL2, RBL1, RBL2, RBBP4, TFDP1 and TFDP2. The complex exists in quiescent cells where it represses cell cycle-dependent genes. It dissociates in S phase when LIN9, LIN37, LIN52 and LIN54 form a subcomplex that binds to MYBL2. As to expression, expressed in a variety of lymphoid and solid tumor lines cultured in vitro.

Its subcellular location is the nucleus. In terms of biological role, transcription factor that specifically recognizes the sequence 5'-YAAC[GT]G-3'. Acts as a master regulator of male meiosis by promoting expression of piRNAs: activates expression of both piRNA precursor RNAs and expression of protein-coding genes involved in piRNA metabolism. The piRNA metabolic process mediates the repression of transposable elements during meiosis by forming complexes composed of piRNAs and Piwi proteins and governs the methylation and subsequent repression of transposons, which is essential for the germline integrity. Transcriptional activator of SOX30. In Homo sapiens (Human), this protein is Myb-related protein A (MYBL1).